The sequence spans 83 residues: uncharacterized protein (83 aa).

The disordered stretch occupies residues 58 to 83; the sequence is EHGHDDEYDEFSDPNAWVPRRSRDTG.

This is an uncharacterized protein from Mycobacterium tuberculosis (strain CDC 1551 / Oshkosh).